We begin with the raw amino-acid sequence, 176 residues long: Large ribosomal subunit protein uL6 (176 aa).

This sequence belongs to the universal ribosomal protein uL6 family. In terms of assembly, part of the 50S ribosomal subunit.

Functionally, this protein binds to the 23S rRNA, and is important in its secondary structure. It is located near the subunit interface in the base of the L7/L12 stalk, and near the tRNA binding site of the peptidyltransferase center. The sequence is that of Large ribosomal subunit protein uL6 from Burkholderia multivorans (strain ATCC 17616 / 249).